A 371-amino-acid polypeptide reads, in one-letter code: Chorismate synthase (371 aa).

The NADP(+) site is built by R48 and R54. FMN-binding positions include 125 to 127 (RSS), 238 to 239 (NA), G278, 293 to 297 (KPTSS), and R319.

This sequence belongs to the chorismate synthase family. In terms of assembly, homotetramer. Requires FMNH2 as cofactor.

The catalysed reaction is 5-O-(1-carboxyvinyl)-3-phosphoshikimate = chorismate + phosphate. It functions in the pathway metabolic intermediate biosynthesis; chorismate biosynthesis; chorismate from D-erythrose 4-phosphate and phosphoenolpyruvate: step 7/7. Its function is as follows. Catalyzes the anti-1,4-elimination of the C-3 phosphate and the C-6 proR hydrogen from 5-enolpyruvylshikimate-3-phosphate (EPSP) to yield chorismate, which is the branch point compound that serves as the starting substrate for the three terminal pathways of aromatic amino acid biosynthesis. This reaction introduces a second double bond into the aromatic ring system. The protein is Chorismate synthase of Polynucleobacter asymbioticus (strain DSM 18221 / CIP 109841 / QLW-P1DMWA-1) (Polynucleobacter necessarius subsp. asymbioticus).